Here is a 161-residue protein sequence, read N- to C-terminus: E3 ubiquitin ligase complex SCF subunit sconC (161 aa).

Residues Ile-102 to Arg-161 are interaction with the F-box domain of F-box proteins.

Belongs to the SKP1 family. Component of the SCF (SKP1-CUL1-F-box protein) E3 ubiquitin ligase complexes.

The protein operates within protein modification; protein ubiquitination. Essential component of the SCF (SKP1-CUL1-F-box protein) E3 ubiquitin ligase complexes, which mediate the ubiquitination and subsequent proteasomal degradation of target proteins. Controls sulfur metabolite repression, probably by mediating the inactivation or degradation of the metR transcription factor. The sequence is that of E3 ubiquitin ligase complex SCF subunit sconC (sconC) from Aspergillus flavus (strain ATCC 200026 / FGSC A1120 / IAM 13836 / NRRL 3357 / JCM 12722 / SRRC 167).